The following is a 555-amino-acid chain: CTP synthase (555 aa).

Residues 1–272 (MQPTSTTTKH…DAYVVRKLDL (272 aa)) are amidoligase domain. Ser-19 serves as a coordination point for CTP. Ser-19 provides a ligand contact to UTP. ATP contacts are provided by residues 20–25 (SLGKGL) and Asp-77. Residues Asp-77 and Glu-146 each coordinate Mg(2+). Residues 153–155 (DIE), 193–198 (KTKPTQ), and Lys-229 each bind CTP. UTP is bound by residues 193–198 (KTKPTQ) and Lys-229. The region spanning 297-548 (TVALVGKYID…VKAAVARQVA (252 aa)) is the Glutamine amidotransferase type-1 domain. Position 360 (Gly-360) interacts with L-glutamine. Cys-387 acts as the Nucleophile; for glutamine hydrolysis in catalysis. Residues 388 to 391 (LGLQ), Glu-411, and Arg-473 each bind L-glutamine. Active-site residues include His-521 and Glu-523.

It belongs to the CTP synthase family. In terms of assembly, homotetramer.

The enzyme catalyses UTP + L-glutamine + ATP + H2O = CTP + L-glutamate + ADP + phosphate + 2 H(+). It catalyses the reaction L-glutamine + H2O = L-glutamate + NH4(+). The catalysed reaction is UTP + NH4(+) + ATP = CTP + ADP + phosphate + 2 H(+). Its pathway is pyrimidine metabolism; CTP biosynthesis via de novo pathway; CTP from UDP: step 2/2. Allosterically activated by GTP, when glutamine is the substrate; GTP has no effect on the reaction when ammonia is the substrate. The allosteric effector GTP functions by stabilizing the protein conformation that binds the tetrahedral intermediate(s) formed during glutamine hydrolysis. Inhibited by the product CTP, via allosteric rather than competitive inhibition. Functionally, catalyzes the ATP-dependent amination of UTP to CTP with either L-glutamine or ammonia as the source of nitrogen. Regulates intracellular CTP levels through interactions with the four ribonucleotide triphosphates. This chain is CTP synthase, found in Streptomyces griseus subsp. griseus (strain JCM 4626 / CBS 651.72 / NBRC 13350 / KCC S-0626 / ISP 5235).